The sequence spans 290 residues: Transcription factor HES-1 (290 aa).

The disordered stretch occupies residues 1–47 (MPADTGMEKPTASPIAGAPASASHTPDKPRSASEHRKSSKPIMEKRR). The segment covering 10–23 (PTASPIAGAPASAS) has biased composition (low complexity). Residues 25–36 (TPDKPRSASEHR) show a composition bias toward basic and acidic residues. Positions 35–92 (HRKSSKPIMEKRRRARINESLGQLKMLILDALKKDSSRHSKLEKADILEMTVKHLRNL) constitute a bHLH domain. In terms of domain architecture, Orange spans 111–144 (YRAGFNECMNEVTRFLSTCEGVNADVRARLLGHL). Positions 287–290 (WRPW) match the WRPW motif motif.

Transcription repression requires formation of a complex with a corepressor protein of the Groucho/TLE family.

It is found in the nucleus. Its function is as follows. Transcriptional repressor of genes that require a bHLH protein for their transcription. May act as a negative regulator of myogenesis by inhibiting the functions of MYOD1 and ASH1. The sequence is that of Transcription factor HES-1 (HES1) from Gallus gallus (Chicken).